The sequence spans 160 residues: Transcription antitermination protein NusB (160 aa).

It belongs to the NusB family.

Functionally, involved in transcription antitermination. Required for transcription of ribosomal RNA (rRNA) genes. Binds specifically to the boxA antiterminator sequence of the ribosomal RNA (rrn) operons. In Nitrobacter hamburgensis (strain DSM 10229 / NCIMB 13809 / X14), this protein is Transcription antitermination protein NusB.